Consider the following 358-residue polypeptide: Histidinol-phosphate aminotransferase (358 aa).

N6-(pyridoxal phosphate)lysine is present on Lys-218.

It belongs to the class-II pyridoxal-phosphate-dependent aminotransferase family. Histidinol-phosphate aminotransferase subfamily. As to quaternary structure, homodimer. Pyridoxal 5'-phosphate is required as a cofactor.

The enzyme catalyses L-histidinol phosphate + 2-oxoglutarate = 3-(imidazol-4-yl)-2-oxopropyl phosphate + L-glutamate. Its pathway is amino-acid biosynthesis; L-histidine biosynthesis; L-histidine from 5-phospho-alpha-D-ribose 1-diphosphate: step 7/9. The sequence is that of Histidinol-phosphate aminotransferase from Dehalococcoides mccartyi (strain CBDB1).